We begin with the raw amino-acid sequence, 446 residues long: High mobility group B protein 13 (446 aa).

Disordered regions lie at residues 1 to 43 and 110 to 130; these read MSTV…TKSF and LAQT…AETK. A compositionally biased stretch (basic residues) spans 11–22; the sequence is AKKSRNSRKALK. DNA-binding regions (HMG box) lie at residues 129–197 and 246–312; these read TKRP…TKEK and PKQP…EGYK. Residues 349–371 are compositionally biased toward basic and acidic residues; it reads NIIKKTKETAKNKKKNENVDPNK. The interval 349–377 is disordered; sequence NIIKKTKETAKNKKKNENVDPNKPKKPTS. Positions 372–440 form a DNA-binding region, HMG box 3; sequence PKKPTSSYFL…AYKKEVEEYN (69 aa).

This sequence belongs to the HMGB family.

It is found in the nucleus. In Arabidopsis thaliana (Mouse-ear cress), this protein is High mobility group B protein 13 (HMGB13).